The sequence spans 235 residues: Vacuolar protein sorting-associated protein 60.2 (235 aa).

A disordered region spans residues Met-1 to Ser-30. Over residues Ala-20–Ser-30 the composition is skewed to basic and acidic residues. Residues Leu-99–Thr-148 adopt a coiled-coil conformation. The segment at Asp-174 to Gly-235 is disordered.

The protein belongs to the SNF7 family.

The protein localises to the endosome. Its subcellular location is the multivesicular body membrane. In terms of biological role, probable peripherally associated component of the endosomal sorting required for transport complex III (ESCRT-III) which is involved in multivesicular bodies (MVBs) formation and sorting of endosomal cargo proteins into MVBs. The polypeptide is Vacuolar protein sorting-associated protein 60.2 (Arabidopsis thaliana (Mouse-ear cress)).